We begin with the raw amino-acid sequence, 1863 residues long: Breast cancer type 1 susceptibility protein homolog (1863 aa).

Residue Met1 is modified to N-acetylmethionine. An RING-type zinc finger spans residues 24–65; it reads CPICLELIKEPVSTKCDHIFCKFCMLKLLNQKKGPSQCPLCK. Lys109 is covalently cross-linked (Glycyl lysine isopeptide (Lys-Gly) (interchain with G-Cter in SUMO2)). Ser114 is modified (phosphoserine). The tract at residues 231–267 is disordered; the sequence is TDVTNTEHHQPSNNDLNTTEKRATERHPEKYQGSSVS. Residues 248–260 show a composition bias toward basic and acidic residues; that stretch reads TTEKRATERHPEK. Lys301 participates in a covalent cross-link: Glycyl lysine isopeptide (Lys-Gly) (interchain with G-Cter in SUMO2). The interval 306-338 is disordered; sequence NKSKQPGLARSQHNRWAGSKETCNDRQTPSTEK. Residue Lys339 forms a Glycyl lysine isopeptide (Lys-Gly) (interchain with G-Cter in SUMO2) linkage. A phosphoserine mark is found at Ser395, Ser398, Ser423, and Ser434. Glycyl lysine isopeptide (Lys-Gly) (interchain with G-Cter in SUMO2) cross-links involve residues Lys443, Lys459, and Lys519. The residue at position 551 (Ser551) is a Phosphoserine. Glycyl lysine isopeptide (Lys-Gly) (interchain with G-Cter in SUMO2) cross-links involve residues Lys583 and Lys654. The segment at 650 to 735 is disordered; the sequence is IKKKKYNQMP…LPREEKEEKL (86 aa). 3 positions are modified to phosphoserine: Ser694, Ser708, and Ser725. Residues 705 to 716 show a composition bias toward polar residues; it reads APGSFTNCSNTS. Residues Lys734 and Lys739 each participate in a glycyl lysine isopeptide (Lys-Gly) (interchain with G-Cter in SUMO2) cross-link. Residues Ser753 and Ser840 each carry the phosphoserine modification. Residues Lys918 and Lys987 each participate in a glycyl lysine isopeptide (Lys-Gly) (interchain with G-Cter in SUMO2) cross-link. Ser988 bears the Phosphoserine; by CHEK2 mark. The residue at position 1009 (Ser1009) is a Phosphoserine. Residues 1045–1066 are disordered; it reads NEVGSSTNEVGSSINEVGSSDE. A Glycyl lysine isopeptide (Lys-Gly) (interchain with G-Cter in SUMO2) cross-link involves residue Lys1079. A phosphoserine mark is found at Ser1143, Ser1189, Ser1191, Ser1211, Ser1217, Ser1218, Ser1280, Ser1328, Ser1336, Ser1342, and Ser1387. The interval 1181-1216 is disordered; the sequence is VQRGELSRSPSPFTHTHLAQGYRRGAKKLESSEENL. Residues 1322 to 1394 form a disordered region; it reads KQMRHQSESQ…LSSQSDILTT (73 aa). A compositionally biased stretch (acidic residues) spans 1342–1360; it reads SDDEERGTDLEENNQEEQG. The span at 1373 to 1394 shows a compositional bias: polar residues; that stretch reads ESETSVSEDCSGLSSQSDILTT. A Phosphothreonine modification is found at Thr1394. The tract at residues 1397–1424 is interaction with PALB2; that stretch reads RDTMQDNLIKLQQEMAELEAVLEQHGSQ. Phosphoserine is present on residues Ser1423, Ser1457, Ser1524, and Ser1542. Residues 1440 to 1504 form a disordered region; sequence EDLRNPEQST…RSSPSKCPSL (65 aa). Residues 1445–1470 show a composition bias toward polar residues; that stretch reads PEQSTSEKAVLTSQKSSEYPISQNPE. Disordered stretches follow at residues 1540-1597 and 1610-1642; these read EESG…PSST and SAQS…LTAS. A compositionally biased stretch (polar residues) spans 1610–1624; sequence SAQSPAAAQTTNTAG. BRCT domains follow at residues 1642–1736 and 1756–1855; these read STER…DFEV and QDRK…TYLI.

As to quaternary structure, heterodimer with BARD1. Part of the BRCA1-associated genome surveillance complex (BASC), which contains BRCA1, MSH2, MSH6, MLH1, ATM, BLM, PMS2 and the MRE11-RAD50-NBN protein (MRN) complex. This association could be a dynamic process changing throughout the cell cycle and within subnuclear domains. Component of the BRCA1-A complex, at least composed of BRCA1, BARD1, UIMC1/RAP80, ABRAXAS1, BRCC3/BRCC36, BABAM2 and BABAM1/NBA1. Interacts (via the BRCT domains) with ABRAXAS1 (phosphorylated form); this is important for recruitment to sites of DNA damage. Can form a heterotetramer with two molecules of ABRAXAS1 (phosphorylated form). Component of the BRCA1-RBBP8 complex. Interacts (via the BRCT domains) with RBBP8 ('Ser-327' phosphorylated form); the interaction ubiquitinates RBBP8, regulates CHEK1 activation, and involves RBBP8 in BRCA1-dependent G2/M checkpoint control on DNA damage. Associates with RNA polymerase II holoenzyme. Interacts with SMC1A, NELFB, DCLRE1C, CLSPN. CHEK1, CHEK2, BAP1, BRCC3, UBXN1 and PCLAF. Interacts (via BRCT domains) with BRIP1 (phosphorylated form). Interacts with FANCD2 (ubiquitinated form). Interacts with H2AX (phosphorylated on 'Ser-140'). Interacts (via the BRCT domains) with ACACA (phosphorylated form); the interaction prevents dephosphorylation of ACACA. Part of a BRCA complex containing BRCA1, BRCA2 and PALB2. Interacts directly with PALB2; the interaction is essential for its function in HRR. Interacts directly with BRCA2; the interaction occurs only in the presence of PALB2 which serves as the bridging protein. Interacts (via the BRCT domains) with LMO4; the interaction represses the transcriptional activity of BRCA1. Interacts (via the BRCT domains) with CCAR2 (via N-terminus); the interaction represses the transcriptional activator activity of BRCA1. Interacts with EXD2. Interacts (via C-terminus) with DHX9; this interaction is direct and links BRCA1 to the RNA polymerase II holoenzyme. Interacts with DNA helicase ZGRF1; the interaction is increased following DNA damage induction. In terms of processing, phosphorylated in response to IR, UV, and various stimuli that cause checkpoint activation, probably by ATM or ATR. Phosphorylation at Ser-988 by CHEK2 regulates mitotic spindle assembly. Phosphorylation by AURKA regulates centrosomal microtubule nucleation. Autoubiquitinated, undergoes 'Lys-6'-linked polyubiquitination. 'Lys-6'-linked polyubiquitination does not promote degradation.

The protein resides in the nucleus. It is found in the chromosome. Its subcellular location is the cytoplasm. The enzyme catalyses S-ubiquitinyl-[E2 ubiquitin-conjugating enzyme]-L-cysteine + [acceptor protein]-L-lysine = [E2 ubiquitin-conjugating enzyme]-L-cysteine + N(6)-ubiquitinyl-[acceptor protein]-L-lysine.. It participates in protein modification; protein ubiquitination. Its function is as follows. E3 ubiquitin-protein ligase that specifically mediates the formation of 'Lys-6'-linked polyubiquitin chains and plays a central role in DNA repair by facilitating cellular responses to DNA damage. It is unclear whether it also mediates the formation of other types of polyubiquitin chains. The BRCA1-BARD1 heterodimer coordinates a diverse range of cellular pathways such as DNA damage repair, ubiquitination and transcriptional regulation to maintain genomic stability. Regulates centrosomal microtubule nucleation. Required for appropriate cell cycle arrests after ionizing irradiation in both the S-phase and the G2 phase of the cell cycle. Required for FANCD2 targeting to sites of DNA damage. Inhibits lipid synthesis by binding to inactive phosphorylated ACACA and preventing its dephosphorylation. Contributes to homologous recombination repair (HRR) via its direct interaction with PALB2, fine-tunes recombinational repair partly through its modulatory role in the PALB2-dependent loading of BRCA2-RAD51 repair machinery at DNA breaks. Component of the BRCA1-RBBP8 complex which regulates CHEK1 activation and controls cell cycle G2/M checkpoints on DNA damage via BRCA1-mediated ubiquitination of RBBP8. Acts as a transcriptional activator. This chain is Breast cancer type 1 susceptibility protein homolog (BRCA1), found in Pongo pygmaeus (Bornean orangutan).